The primary structure comprises 314 residues: Probable cell division protein WhiA (314 aa).

Positions 274 to 308 (SLKELGEMVSTGTISKSGVNHRLRKLNELADKIRS) form a DNA-binding region, H-T-H motif.

It belongs to the WhiA family.

Involved in cell division and chromosome segregation. The protein is Probable cell division protein WhiA of Staphylococcus carnosus (strain TM300).